Reading from the N-terminus, the 385-residue chain is Chaperone protein DnaJ (385 aa).

One can recognise a J domain in the interval 5–70 (DFYDVLGVSR…QSRAAYDQFG (66 aa)). The CR-type zinc finger occupies 143-221 (GKKAQVRVPG…CHGAGRVEKE (79 aa)). 8 residues coordinate Zn(2+): cysteine 156, cysteine 159, cysteine 173, cysteine 176, cysteine 195, cysteine 198, cysteine 209, and cysteine 212. CXXCXGXG motif repeat units lie at residues 156–163 (CEVCTGTG), 173–180 (CPTCQGHG), 195–202 (CPTCHGRG), and 209–216 (CTNCHGAG).

It belongs to the DnaJ family. Homodimer. Zn(2+) serves as cofactor.

Its subcellular location is the cytoplasm. Its function is as follows. Participates actively in the response to hyperosmotic and heat shock by preventing the aggregation of stress-denatured proteins and by disaggregating proteins, also in an autonomous, DnaK-independent fashion. Unfolded proteins bind initially to DnaJ; upon interaction with the DnaJ-bound protein, DnaK hydrolyzes its bound ATP, resulting in the formation of a stable complex. GrpE releases ADP from DnaK; ATP binding to DnaK triggers the release of the substrate protein, thus completing the reaction cycle. Several rounds of ATP-dependent interactions between DnaJ, DnaK and GrpE are required for fully efficient folding. Also involved, together with DnaK and GrpE, in the DNA replication of plasmids through activation of initiation proteins. The sequence is that of Chaperone protein DnaJ from Parvibaculum lavamentivorans (strain DS-1 / DSM 13023 / NCIMB 13966).